A 268-amino-acid chain; its full sequence is 3-deoxy-manno-octulosonate cytidylyltransferase (268 aa).

The protein belongs to the KdsB family.

The protein localises to the cytoplasm. The enzyme catalyses 3-deoxy-alpha-D-manno-oct-2-ulosonate + CTP = CMP-3-deoxy-beta-D-manno-octulosonate + diphosphate. It participates in nucleotide-sugar biosynthesis; CMP-3-deoxy-D-manno-octulosonate biosynthesis; CMP-3-deoxy-D-manno-octulosonate from 3-deoxy-D-manno-octulosonate and CTP: step 1/1. It functions in the pathway bacterial outer membrane biogenesis; lipopolysaccharide biosynthesis. In terms of biological role, activates KDO (a required 8-carbon sugar) for incorporation into bacterial lipopolysaccharide in Gram-negative bacteria. This Ralstonia nicotianae (strain ATCC BAA-1114 / GMI1000) (Ralstonia solanacearum) protein is 3-deoxy-manno-octulosonate cytidylyltransferase.